The chain runs to 227 residues: Dephospho-CoA kinase (227 aa).

The DPCK domain occupies 31–227 (KIGLTGGIGS…EKLFQFINCL (197 aa)). 39–44 (GSGKST) contributes to the ATP binding site.

This sequence belongs to the CoaE family.

It is found in the cytoplasm. It carries out the reaction 3'-dephospho-CoA + ATP = ADP + CoA + H(+). It participates in cofactor biosynthesis; coenzyme A biosynthesis; CoA from (R)-pantothenate: step 5/5. Its function is as follows. Catalyzes the phosphorylation of the 3'-hydroxyl group of dephosphocoenzyme A to form coenzyme A. This chain is Dephospho-CoA kinase, found in Clostridium tetani (strain Massachusetts / E88).